A 281-amino-acid chain; its full sequence is Carbonic anhydrase (281 aa).

Zn(2+)-binding residues include Cys-106, His-161, and Cys-164.

Belongs to the beta-class carbonic anhydrase family. Requires Zn(2+) as cofactor.

Its subcellular location is the cytoplasm. It is found in the nucleus. The protein localises to the mitochondrion intermembrane space. The enzyme catalyses hydrogencarbonate + H(+) = CO2 + H2O. With respect to regulation, amines and amino acids act as activators of catalytic activity, whereas natural product-based phenols, dithiocarbamates, aliphatic and aromatic carboxylates, boronic acids, and sulfonamides act as inhibitors of enzymatic activity. Also inhibited by anions such as cyanide and carbonate, and to a lesser extent by sulfate, phenylboronic, and phenyl arsonic acid. Functionally, catalyzes the reversible hydration of CO(2) to H(2)CO(3). The main role may be to provide inorganic carbon for the bicarbonate-dependent carboxylation reactions catalyzed by pyruvate carboxylase, acetyl-CoA carboxylase and carbamoyl-phosphate synthetase. Involved in protection against oxidative damage. Acts as a CO(2) chemosensor and induces CO(2)-mediated filamentation. Essential for pathological growth in niches where sufficient CO(2) is not supplied by the host. Necessary for white-to-opaque switching at low CO(2) concentrations. This Candida albicans (strain SC5314 / ATCC MYA-2876) (Yeast) protein is Carbonic anhydrase (NCE103).